The primary structure comprises 500 residues: Lysine--tRNA ligase (500 aa).

2 residues coordinate Mg(2+): Glu410 and Glu417.

Belongs to the class-II aminoacyl-tRNA synthetase family. Homodimer. The cofactor is Mg(2+).

The protein localises to the cytoplasm. The enzyme catalyses tRNA(Lys) + L-lysine + ATP = L-lysyl-tRNA(Lys) + AMP + diphosphate. The polypeptide is Lysine--tRNA ligase (Pseudomonas fluorescens (strain ATCC BAA-477 / NRRL B-23932 / Pf-5)).